The chain runs to 303 residues: Probable 5-dehydro-4-deoxyglucarate dehydratase (303 aa).

It belongs to the DapA family.

The catalysed reaction is 5-dehydro-4-deoxy-D-glucarate + H(+) = 2,5-dioxopentanoate + CO2 + H2O. Its pathway is carbohydrate acid metabolism; D-glucarate degradation; 2,5-dioxopentanoate from D-glucarate: step 2/2. The protein is Probable 5-dehydro-4-deoxyglucarate dehydratase of Pseudomonas syringae pv. syringae (strain B728a).